The primary structure comprises 681 residues: Angiomotin-like 2b (681 aa).

Residues 68 to 84 show a composition bias toward low complexity; sequence GGGAASSSQSSSESLSQ. The segment at 68–106 is disordered; it reads GGGAASSSQSSSESLSQDEPHSPQLSTRQEPQGQEHQVD. Polar residues predominate over residues 90-102; it reads PQLSTRQEPQGQE. At Y126 the chain carries Phosphotyrosine; by FGFR1. Coiled coils occupy residues 268-319, 362-441, and 481-508; these read NACS…LMKG, IEKL…LQAT, and VYTL…WEQK. The disordered stretch occupies residues 589 to 618; sequence QLGALQPATADSSIISSHSTPAHTAQGKER. Positions 597 to 611 are enriched in polar residues; sequence TADSSIISSHSTPAH. Residues 678 to 681 carry the PDZ-binding motif; it reads EIFI.

Belongs to the angiomotin family. Interacts with SRC. In terms of processing, phosphorylation at Tyr-126 is necessary for efficient binding to SRC and synergistically functioning with SRC to activate the downstream MAPK pathway. As to expression, expressed in endothelial cells.

Its subcellular location is the recycling endosome. It localises to the cytoplasm. It is found in the cell projection. The protein localises to the podosome. The protein resides in the cell junction. Required for proper architecture of actin filaments and for cell movements during embryogenesis. Plays a role in the radial actin fiber architecture in skin epithelial cells, thereby maintains cell geometry, size and cell interconnectivity within the skin. Plays an important role in coupling actin fibers to cell junctions in endothelial cells and is therefore required for correct endothelial cell morphology and maintenance of dorsal aorta lumen expansion during embryogenesis. May further play a role in the polarity, proliferation and migration of endothelial cells, and therefore participates in angiogenesis. May regulate the translocation of phosphorylated SRC to peripheral cell-matrix adhesion sites. The polypeptide is Angiomotin-like 2b (Danio rerio (Zebrafish)).